Here is a 527-residue protein sequence, read N- to C-terminus: MELKFSAEVELTLSREVDPAEIEPTVEEFVKEANEDLLQRGVPTGKEGAKIESYRVLEDTIEMEITGTRYLRPHEAAMRVRKRLAERLGRKHRVGVRDLKIPRYEVVLRFDREVTRDDVGYVPVADDVVVEDGTVRLTFQDVDEEMLRRHVIDRVIRLVAWAVEERSELVERVTKVEPGTVVDESGPREIRFDGDVTEEARRRGWVKEFPGRGQWIYTPPMAALFEVLRDFLLERVTRKLGFEPALFPKLIPLETMFRMRYLHGLPDGMYYVCPPKRDPELFDDFKRELYVWGELNERTLGSLKEKLRDPGYVLAPAQCEPFYELLRDEVVDPERLPIKLYDCSGWTYRWEGGAAKGLERVNEFQRIEHVWIAEPEEAERIREELLEATKRVAEELELEWKVVVSDDPFYLEGRLLEDRDIELPDVPSYEFEVYLPFKGERSSEEAWISVGSFNVHGEHFVDGFNVKEKSGRTLFTGCAGLGVTRWVVGLLAQHGFEPEEWPEPILERIDEKFGGLPEVPKTLTWPE.

Ala317 serves as a coordination point for L-serine. Cys319 serves as a coordination point for Zn(2+). Arg349 contributes to the L-serine binding site. ATP-binding positions include 349–351 and 360–361; these read RWE and RV. 366–368 serves as a coordination point for L-serine; that stretch reads RIE. Glu368 and Cys478 together coordinate Zn(2+). Arg485 contacts ATP.

The protein belongs to the class-II aminoacyl-tRNA synthetase family. Type-2 seryl-tRNA synthetase subfamily. In terms of assembly, homodimer. The cofactor is Zn(2+).

The protein localises to the cytoplasm. It carries out the reaction tRNA(Ser) + L-serine + ATP = L-seryl-tRNA(Ser) + AMP + diphosphate + H(+). It catalyses the reaction tRNA(Sec) + L-serine + ATP = L-seryl-tRNA(Sec) + AMP + diphosphate + H(+). The protein operates within aminoacyl-tRNA biosynthesis; selenocysteinyl-tRNA(Sec) biosynthesis; L-seryl-tRNA(Sec) from L-serine and tRNA(Sec): step 1/1. In terms of biological role, catalyzes the attachment of serine to tRNA(Ser). Is also able to aminoacylate tRNA(Sec) with serine, to form the misacylated tRNA L-seryl-tRNA(Sec), which will be further converted into selenocysteinyl-tRNA(Sec). This is Type-2 serine--tRNA ligase from Methanopyrus kandleri (strain AV19 / DSM 6324 / JCM 9639 / NBRC 100938).